We begin with the raw amino-acid sequence, 218 residues long: GTP cyclohydrolase 1 (218 aa).

3 residues coordinate Zn(2+): C109, H112, and C180.

This sequence belongs to the GTP cyclohydrolase I family. Toroid-shaped homodecamer, composed of two pentamers of five dimers.

It catalyses the reaction GTP + H2O = 7,8-dihydroneopterin 3'-triphosphate + formate + H(+). Its pathway is cofactor biosynthesis; 7,8-dihydroneopterin triphosphate biosynthesis; 7,8-dihydroneopterin triphosphate from GTP: step 1/1. This Aeromonas salmonicida (strain A449) protein is GTP cyclohydrolase 1.